We begin with the raw amino-acid sequence, 104 residues long: Large ribosomal subunit protein bL21c (104 aa).

This sequence belongs to the bacterial ribosomal protein bL21 family. As to quaternary structure, part of the 50S ribosomal subunit.

It localises to the plastid. Its subcellular location is the chloroplast. In terms of biological role, this protein binds to 23S rRNA. The polypeptide is Large ribosomal subunit protein bL21c (Pyropia yezoensis (Susabi-nori)).